A 292-amino-acid chain; its full sequence is NAC domain-containing protein 96 (292 aa).

An NAC domain is found at 6–158; that stretch reads LPPGFRFHPT…AFVLCRVAMK (153 aa). Residues 106–164 mediate DNA binding; sequence IGYRKTLVFYKGRAPLGDRSNWIMHEYRLCDDDTSQGSQNLKGAFVLCRVAMKNEIKTN. Residues 171–199 form a disordered region; the sequence is PSEQTIGSGESSGLSSRVTSPSRDETMPF. Residues 172-191 are compositionally biased toward polar residues; sequence SEQTIGSGESSGLSSRVTSP.

Interacts with ABF2 and ABF4. As to expression, expressed in roots, rosettes leaves, cauline leaves and stems.

The protein localises to the nucleus. Functionally, transcriptional activator involved in the positive regulation of abscisic acid (ABA) responsive genes. Acts as a positive factor of ABA-mediated responses. Involved in the transcriptional activation of ABA-inducible genes in response to dehydration and osmotic stresses. Plays a positive role in both stomatal closure and water loss under dehydration stress conditions. Acts synergistically with ABF2 to activate the dehydration stress-response factor RD29A transcription. Binds to the consensus core cis-acting elements 5'-CGTA-3' and 5'-CACG-3' at the RD29A promoter. Involved in hypocotyl graft union formation. Required for the auxin-mediated promotion of vascular tissue proliferation during hypocotyl graft attachment. The chain is NAC domain-containing protein 96 from Arabidopsis thaliana (Mouse-ear cress).